The sequence spans 514 residues: Mitochondrial-processing peptidase subunit alpha (514 aa).

A mitochondrion-targeting transit peptide spans 1-55 (MLLRKSIPYIKICRDISASVRNNKEIAQKLPLSVPLPMENNSKSIEKGCPPMGRN).

This sequence belongs to the peptidase M16 family. In terms of assembly, heterodimer of mppa-1 (alpha) and mppb-1 (beta) subunits, forming the mitochondrial processing protease (MPP) in which mppa-1 is involved in substrate recognition and binding and mppb-1 is the catalytic subunit.

It localises to the mitochondrion matrix. Functionally, substrate recognition and binding subunit of the essential mitochondrial processing protease (MPP), which cleaves the mitochondrial sequence off newly imported precursors proteins. In Caenorhabditis elegans, this protein is Mitochondrial-processing peptidase subunit alpha.